The following is a 996-amino-acid chain: Low-density lipoprotein receptor-related protein 8 (996 aa).

Positions 1–28 (MGRPELGALRPLALLLLLLLQLQHLSAA) are cleaved as a signal peptide. Topologically, residues 29-858 (DPLPGGQGPV…GSQMGSTVTA (830 aa)) are extracellular. 8 LDL-receptor class A domains span residues 40 to 76 (ECEE…DDCP), 79 to 117 (TCAD…ATCS), 120 to 158 (ECPA…AGCP), 160 to 196 (LCAP…RGCS), 199 to 238 (ACPP…ELCG), 250 to 287 (ACAP…ADCS), 290 to 326 (PCRE…AGCL), and 330 to 369 (TCEG…KVCG). 30 disulfides stabilise this stretch: Cys-41-Cys-53, Cys-48-Cys-66, Cys-60-Cys-75, Cys-80-Cys-92, Cys-87-Cys-105, Cys-99-Cys-116, Cys-121-Cys-135, Cys-128-Cys-148, Cys-142-Cys-157, Cys-161-Cys-173, Cys-168-Cys-186, Cys-180-Cys-195, Cys-200-Cys-213, Cys-207-Cys-226, Cys-220-Cys-237, Cys-251-Cys-264, Cys-259-Cys-277, Cys-271-Cys-286, Cys-291-Cys-303, Cys-298-Cys-316, Cys-310-Cys-325, Cys-331-Cys-344, Cys-339-Cys-357, Cys-351-Cys-368, Cys-373-Cys-384, Cys-380-Cys-393, Cys-395-Cys-407, Cys-413-Cys-423, Cys-419-Cys-432, and Cys-434-Cys-447. Trp-58, Asp-61, Asp-63, Asp-65, Asp-71, and Glu-72 together coordinate Ca(2+). Asn-170 carries an N-linked (GlcNAc...) asparagine glycan. In terms of domain architecture, EGF-like 1 spans 364-408 (PQKVCGLNECLHNNGGCSHICTDLKIGFECTCPAGFQLLDQKTCG). Positions 409 to 448 (DIDECQDPDACSQICVNYKGYFKCECHPGYEMDTLTKNCK) constitute an EGF-like 2; calcium-binding domain. LDL-receptor class B repeat units follow at residues 495–541 (NRIY…DWVH), 542–584 (KHIY…DPLR), 585–628 (GFMY…DLLS), 629–671 (QRLY…AVFE), and 672–714 (DKVF…FHEL). Asn-551 is a glycosylation site (N-linked (GlcNAc...) asparagine). Positions 773–831 (STSTTTLASAMTRTVPATTRAPGTTIHDPTYQNHSTETPSQTAAAPHSVNVPRAPSTSP) are clustered O-linked oligosaccharides. The interval 778-851 (TLASAMTRTV…SQHYGNEGSQ (74 aa)) is disordered. Residues 802–815 (TYQNHSTETPSQTA) show a composition bias toward polar residues. The N-linked (GlcNAc...) asparagine glycan is linked to Asn-805. The span at 824–839 (PRAPSTSPSTPSPATS) shows a compositional bias: low complexity. A glycan (N-linked (GlcNAc...) asparagine) is linked at Asn-840. Over residues 840–851 (NHSQHYGNEGSQ) the composition is skewed to polar residues. The helical transmembrane segment at 859-881 (AVIGVIVPIVVIALLCMSGYLIW) threads the bilayer. Over 882 to 996 (RNWKRKNTKS…ALSLEDDGLP (115 aa)) the chain is Cytoplasmic.

It belongs to the LDLR family. In terms of assembly, homooligomer. Interacts with VLDLR. Reelin associates with two or more receptor molecules. Interacts with DAB1 and JNK-interacting proteins. Interacts with SNX17. Interacts with PCSK9. Interacts with MDK; this interaction is calcium dependent. Interacts with CLU. In terms of processing, O-glycosylated. Some alternatively spliced isoforms lack the O-linked sugar domain. Undergoes sequential, furin and gamma-secretase dependent, proteolytic processing, resulting in the extracellular release of the entire ligand-binding domain as a soluble polypeptide and in the intracellular domain (ICD) release into the cytoplasm. The gamma-secretase-dependent proteolytical processing occurs after the bulk of the extracellular domain has been shed, in a furin-dependent manner, in alternatively spliced isoforms carrying the furin cleavage site. Hypoglycosylation (mainly hypo-O-glycosylation) leads to increased extracellular cleavage, which in turn results in accelerating release of the intracellular domain (ICD) by the gamma-secretase. The resulting receptor fragment is able to inhibit Reelin signaling and in particular the Reelin-induced DAB1 phosphorylation. Post-translationally, tyrosine phosphorylated upon apoE binding. In terms of processing, ubiquitinated by MYLIP leading to degradation. Expressed in neurons throughout the brain, with strong expression in pyramidal neurons of the hippocampus, granule cells of the dentate gyrus, cortical neurons and Purkinje cells of the cerebellum. Also expressed in the epithelium of the choroid plexus and of the blood vessels (apical expression), as well as in the epididymis.

The protein localises to the cell membrane. The protein resides in the secreted. Cell surface receptor for Reelin (RELN) and apolipoprotein E (apoE)-containing ligands. LRP8 participates in transmitting the extracellular Reelin signal to intracellular signaling processes, by binding to DAB1 on its cytoplasmic tail. Reelin acts via both the VLDL receptor (VLDLR) and LRP8 to regulate DAB1 tyrosine phosphorylation and microtubule function in neurons. LRP8 has higher affinity for Reelin than VLDLR. LRP8 is thus a key component of the Reelin pathway which governs neuronal layering of the forebrain during embryonic brain development. Binds the endoplasmic reticulum resident receptor-associated protein (RAP). Binds dimers of beta 2-glycoprotein I and may be involved in the suppression of platelet aggregation in the vasculature. Highly expressed in the initial segment of the epididymis, where it affects the functional expression of clusterin and phospholipid hydroperoxide glutathione peroxidase (PHGPx), two proteins required for sperm maturation. May also function as an endocytic receptor. Not required for endocytic uptake of SEPP1 in the kidney which is mediated by LRP2. Together with its ligand, apolipoprotein E (apoE), may indirectly play a role in the suppression of the innate immune response by controlling the survival of myeloid-derived suppressor cells. This chain is Low-density lipoprotein receptor-related protein 8 (Lrp8), found in Mus musculus (Mouse).